We begin with the raw amino-acid sequence, 392 residues long: tRNA (guanine-N(7)-)-methyltransferase (392 aa).

Residues E123, E148, and D175 each contribute to the S-adenosyl-L-methionine site. The substrate site is built by K201 and D231.

Belongs to the class I-like SAM-binding methyltransferase superfamily. TrmB family.

It carries out the reaction guanosine(46) in tRNA + S-adenosyl-L-methionine = N(7)-methylguanosine(46) in tRNA + S-adenosyl-L-homocysteine. Its pathway is tRNA modification; N(7)-methylguanine-tRNA biosynthesis. In terms of biological role, catalyzes the formation of N(7)-methylguanine at position 46 (m7G46) in tRNA. The chain is tRNA (guanine-N(7)-)-methyltransferase from Campylobacter jejuni subsp. doylei (strain ATCC BAA-1458 / RM4099 / 269.97).